Consider the following 67-residue polypeptide: Putative cytosolic sulfotransferase 2 (67 aa).

Position 31–33 (31–33) interacts with 3'-phosphoadenylyl sulfate; sequence RDG.

Belongs to the sulfotransferase 1 family.

Its subcellular location is the cytoplasm. In terms of biological role, sulfotransferase that utilizes 3'-phospho-5'-adenylyl sulfate (PAPS) as sulfonate donor. The chain is Putative cytosolic sulfotransferase 2 (SOT2) from Arabidopsis thaliana (Mouse-ear cress).